The chain runs to 321 residues: Protein ZAR1-like (321 aa).

The segment at 110 to 214 (RTLSSCSPWD…GDAASEPLRR (105 aa)) is disordered. Residues 145–154 (LRRDGDEAES) show a composition bias toward basic and acidic residues. Residues 222-307 (PKYGYFHCKD…QELCGRCKDK (86 aa)) form a 3CxxC-type zinc finger.

The protein belongs to the ZAR1 family. In terms of assembly, interacts with YBX2.

The protein resides in the cytoplasm. It is found in the cytoplasmic ribonucleoprotein granule. Functionally, mRNA-binding protein required for maternal mRNA storage, translation and degradation during oocyte maturation. Probably promotes formation of some phase-separated membraneless compartment that stores maternal mRNAs in oocytes: acts by undergoing liquid-liquid phase separation upon binding to maternal mRNAs. Binds to the 3'-UTR of maternal mRNAs, inhibiting their translation. The polypeptide is Protein ZAR1-like (Homo sapiens (Human)).